We begin with the raw amino-acid sequence, 324 residues long: Acetyl-coenzyme A carboxylase carboxyl transferase subunit alpha (324 aa).

The 251-residue stretch at 41–291 folds into the CoA carboxyltransferase C-terminal domain; that stretch reads RLDRLKEKIY…QEYVLQEWLK (251 aa).

Belongs to the AccA family. In terms of assembly, acetyl-CoA carboxylase is a heterohexamer composed of biotin carboxyl carrier protein (AccB), biotin carboxylase (AccC) and two subunits each of ACCase subunit alpha (AccA) and ACCase subunit beta (AccD).

It is found in the cytoplasm. The catalysed reaction is N(6)-carboxybiotinyl-L-lysyl-[protein] + acetyl-CoA = N(6)-biotinyl-L-lysyl-[protein] + malonyl-CoA. It functions in the pathway lipid metabolism; malonyl-CoA biosynthesis; malonyl-CoA from acetyl-CoA: step 1/1. Its function is as follows. Component of the acetyl coenzyme A carboxylase (ACC) complex. First, biotin carboxylase catalyzes the carboxylation of biotin on its carrier protein (BCCP) and then the CO(2) group is transferred by the carboxyltransferase to acetyl-CoA to form malonyl-CoA. The chain is Acetyl-coenzyme A carboxylase carboxyl transferase subunit alpha from Chlamydia muridarum (strain MoPn / Nigg).